A 187-amino-acid polypeptide reads, in one-letter code: Aspartic protease inhibitor 9 (187 aa).

An N-linked (GlcNAc...) asparagine glycan is attached at Asn19. Disulfide bonds link Cys48–Cys93 and Cys142–Cys158.

The protein belongs to the protease inhibitor I3 (leguminous Kunitz-type inhibitor) family. In terms of processing, glycosylated. As to expression, tubers.

Its subcellular location is the vacuole. In terms of biological role, inhibitor of cathepsin D (aspartic protease) and trypsin (serine protease). May protect the plant by inhibiting proteases of invading organisms. The protein is Aspartic protease inhibitor 9 of Solanum tuberosum (Potato).